We begin with the raw amino-acid sequence, 595 residues long: E3 ubiquitin-protein ligase synoviolin B (595 aa).

The helical transmembrane segment at 1–19 (MTGASLALTASVVAHAYYL) threads the bilayer. Over 20 to 35 (KNQFYPTVVYLTKSSP) the chain is Lumenal. The chain crosses the membrane as a helical span at residues 36–56 (SMAILYIQAFVLVFLLGKFMG). Topologically, residues 57–92 (KVFFGQLRAAEMEHLLERSWYAVTETCLAFTVFRDD) are cytoplasmic. A helical transmembrane segment spans residues 93–113 (FSPRFVALFTLLLFLKCFHWL). The Lumenal portion of the chain corresponds to 114-129 (AEDRVDFMERSPNISW). The chain crosses the membrane as a helical span at residues 130–150 (LFHFRILALMLLLGVLDAFFV). At 151 to 163 (SHAYNSLVTRGAS) the chain is on the cytoplasmic side. A helical transmembrane segment spans residues 164–184 (VQLVFGFEYAILMTMILAVFI). The Lumenal portion of the chain corresponds to 185–218 (KYILHSVDLQSENPWDNKAVYMLYTELFTGFIKV). The helical transmembrane segment at 219–239 (LLYMAFMTIMVKVHTFPLFAI) threads the bilayer. Residues 230–264 (KVHTFPLFAIRPMYLAMRQFKKAVTDAVMSRRAIR) are interaction with p53/TP53. At 240 to 595 (RPMYLAMRQF…LQKLETTDSQ (356 aa)) the chain is on the cytoplasmic side. Cysteine 285, cysteine 288, cysteine 301, histidine 303, histidine 306, cysteine 309, cysteine 320, and cysteine 323 together coordinate Zn(2+). Residues 285–324 (CIICREEMVSGAKRLPCNHIFHTSCLRSWFQRQQTCPTCR) form an RING-type; atypical zinc finger. The span at 335–353 (QPQTPAEQQNQHQAQQQPT) shows a compositional bias: low complexity. Disordered regions lie at residues 335–370 (QPQTPAEQQNQHQAQQQPTPVVPPQPNFPPGMLPPF) and 386–426 (PVPG…PGAA). Pro residues predominate over residues 354–370 (PVVPPQPNFPPGMLPPF). Residues 390-408 (APVGNPPDEANPGSSSGSS) are compositionally biased toward low complexity. Residues 463–494 (EELRAMEGHERQNLEARLQCLQNIHTLLDAAM) adopt a coiled-coil conformation. The disordered stretch occupies residues 509 to 595 (PPQPPVSSSS…LQKLETTDSQ (87 aa)). A compositionally biased stretch (low complexity) spans 514–552 (VSSSSSSSASASTEPTTSSVSEPVIDTSSIVTTDSSQQS).

The protein belongs to the HRD1 family. In terms of assembly, homodimer.

Its subcellular location is the endoplasmic reticulum membrane. The enzyme catalyses S-ubiquitinyl-[E2 ubiquitin-conjugating enzyme]-L-cysteine + [acceptor protein]-L-lysine = [E2 ubiquitin-conjugating enzyme]-L-cysteine + N(6)-ubiquitinyl-[acceptor protein]-L-lysine.. Its pathway is protein modification; protein ubiquitination. E3 ubiquitin-protein ligase which accepts ubiquitin specifically from endoplasmic reticulum-associated UBC7 E2 ligase and transfers it to substrates, promoting their degradation. Component of the endoplasmic reticulum quality control (ERQC) system also called ER-associated degradation (ERAD) involved in ubiquitin-dependent degradation of misfolded endoplasmic reticulum proteins. Also promotes the degradation of normal but naturally short-lived proteins. Protects cells from ER stress-induced apoptosis. Sequesters p53 in the cytoplasm and promotes its degradation, thereby negatively regulating its biological function in transcription, cell cycle regulation and apoptosis. In Xenopus laevis (African clawed frog), this protein is E3 ubiquitin-protein ligase synoviolin B (syvn1-b).